The following is a 1086-amino-acid chain: Sterol regulatory element-binding protein cleavage-activating protein (1086 aa).

At 1–35 (MRIFTLGKGRISRGYARQVNPSLFAKYSYCIANNP) the chain is on the cytoplasmic side. A helical membrane pass occupies residues 36–56 (WYFILVFTLLSITGIYSSLVA). At 57–229 (YQQSLYDQSL…TVVARIPDLT (173 aa)) the chain is on the lumenal side. N94 and N168 each carry an N-linked (GlcNAc...) asparagine glycan. Residues 230–250 (VIYRWYLWVGFGVGLFAYLYL) form a helical membrane-spanning segment. In terms of domain architecture, SSD spans 233–391 (RWYLWVGFGV…GSFFLAVLSV (159 aa)). Over 251-265 (SLVRLHDIRAKFGLT) the chain is Cytoplasmic. Residues 266-286 (ATIFIQSGTAYFSTCSLLYFF) form a helical membrane-spanning segment. Residues 287 to 290 (ERTG) are Lumenal-facing. The chain crosses the membrane as a helical span at residues 291 to 311 (PICPWPMAYYIIIFMDIENSF). Topologically, residues 312 to 337 (RLLRAVIASPQTKRVPSRIMEGFSST) are cytoplasmic. A helical transmembrane segment spans residues 338-358 (IIASFSSLLKKLLTLFVLSFF). At 359–367 (VYPLVQEFC) the chain is on the lumenal side. The chain crosses the membrane as a helical span at residues 368–388 (LFLACSFVVSFLLHGSFFLAV). Residues 389-422 (LSVDIRRLELQDFLDSNSSNRNSKWWVPYLEYVR) lie on the Cytoplasmic side of the membrane. Residues 396-401 (LELQDF) carry the ER export signal motif. Residues 423-443 (FMWSPWIIDNLGTVSFHMYVI) form a helical membrane-spanning segment. Over 444–544 (YLQLQSSTDI…FHDRRVWRWS (101 aa)) the chain is Lumenal. N-linked (GlcNAc...) asparagine glycosylation is present at N454. Residues 545-565 (TFFSILFAIDFAVGLLVKALL) traverse the membrane as a helical segment. Over 566–1086 (RGWSDHDELS…QRKRSGTIGC (521 aa)) the chain is Cytoplasmic. WD repeat units lie at residues 593 to 632 (HHQL…TKLV), 637 to 675 (QMPR…LMLQ), 680 to 727 (CKPN…EGAD), 736 to 776 (LSSP…WSPK), and 963 to 1009 (GHYN…KKHR). Positions 640–1086 (RTLKAIALDP…QRKRSGTIGC (447 aa)) are interaction with sre1.

The protein belongs to the WD repeat SCAP family. In terms of assembly, forms a tight complex with scp1, composed of 4 copies of scp1 and 4 copies of sre1.

It localises to the endoplasmic reticulum membrane. Its subcellular location is the golgi apparatus membrane. Its function is as follows. Escort protein required for sre1 processing at low sterol as well as oxygen levels. May regulate export of the scp1/sre1 complex from the ER at low sterol or oxygen levels. 4-methyl sterols bound to scp1 may mask an ER export signal in scp1 leading to retention of the complex in the ER. Release of 4-methyl sterols may trigger a conformational change in the SSD domain of scp1 unmasking the ER export signal leading to recruitment into COPII-coated vesicles, transport to the Golgi complex, proteolytic cleavage of sre1 in the Golgi, release of the transcription factor fragment of sre1 from the membrane, its import into the nucleus and up-regulation of genes required for ergosterol biosynthesis as well as anaerobic growth. Binds 4-methyl sterols. This is Sterol regulatory element-binding protein cleavage-activating protein from Schizosaccharomyces pombe (strain 972 / ATCC 24843) (Fission yeast).